Consider the following 332-residue polypeptide: Glycerol-3-phosphate dehydrogenase [NAD(P)+] (332 aa).

NADPH contacts are provided by Trp13, Lys34, and Lys108. Positions 108, 136, and 138 each coordinate sn-glycerol 3-phosphate. Ala140 lines the NADPH pocket. Positions 191, 244, 254, 255, and 256 each coordinate sn-glycerol 3-phosphate. Lys191 serves as the catalytic Proton acceptor. Arg255 lines the NADPH pocket. NADPH-binding residues include Val279 and Glu281.

The protein belongs to the NAD-dependent glycerol-3-phosphate dehydrogenase family.

Its subcellular location is the cytoplasm. It catalyses the reaction sn-glycerol 3-phosphate + NAD(+) = dihydroxyacetone phosphate + NADH + H(+). The enzyme catalyses sn-glycerol 3-phosphate + NADP(+) = dihydroxyacetone phosphate + NADPH + H(+). It participates in membrane lipid metabolism; glycerophospholipid metabolism. Catalyzes the reduction of the glycolytic intermediate dihydroxyacetone phosphate (DHAP) to sn-glycerol 3-phosphate (G3P), the key precursor for phospholipid synthesis. This Francisella philomiragia subsp. philomiragia (strain ATCC 25017 / CCUG 19701 / FSC 153 / O#319-036) protein is Glycerol-3-phosphate dehydrogenase [NAD(P)+].